We begin with the raw amino-acid sequence, 826 residues long: Zinc phosphodiesterase ELAC protein 2 (826 aa).

Residues 1–16 (MWALCSLLRSAAGRTM) constitute a mitochondrion transit peptide. Disordered regions lie at residues 16 to 51 (MSQG…PSGC) and 188 to 231 (EQRR…VSQR). The span at 27 to 38 (ARRERPRKDPLR) shows a compositional bias: basic and acidic residues. Residues Ser199, Ser208, Ser212, Ser229, Ser618, and Ser736 each carry the phosphoserine modification. Positions 208-224 (SPERSSDSESNENEPHL) are enriched in basic and acidic residues. The tract at residues 798–826 (ELAGGLEDGEPQQKRAHTEEPQAKKVRAQ) is disordered. Basic and acidic residues predominate over residues 808–820 (PQQKRAHTEEPQA).

It belongs to the RNase Z family. Homodimer. Interacts with PTCD1. Zn(2+) is required as a cofactor. As to expression, widely expressed. Highly expressed in heart, placenta, liver, skeletal muscle, kidney, pancreas, testis and ovary. Weakly expressed in brain, lung, spleen, thymus, prostate, small intestine, colon and leukocytes.

It localises to the mitochondrion. The protein localises to the mitochondrion matrix. Its subcellular location is the mitochondrion nucleoid. It is found in the nucleus. It carries out the reaction Endonucleolytic cleavage of RNA, removing extra 3' nucleotides from tRNA precursor, generating 3' termini of tRNAs. A 3'-hydroxy group is left at the tRNA terminus and a 5'-phosphoryl group is left at the trailer molecule.. In terms of biological role, zinc phosphodiesterase, which displays mitochondrial tRNA 3'-processing endonuclease activity. Involved in tRNA maturation, by removing a 3'-trailer from precursor tRNA. Associates with mitochondrial DNA complexes at the nucleoids to initiate RNA processing and ribosome assembly. The sequence is that of Zinc phosphodiesterase ELAC protein 2 (ELAC2) from Homo sapiens (Human).